A 454-amino-acid chain; its full sequence is Serine--tRNA ligase (454 aa).

T247–E249 contributes to the L-serine binding site. ATP is bound by residues R278 to E280 and V294. E301 serves as a coordination point for L-serine. E365–S368 is an ATP binding site. T400 provides a ligand contact to L-serine.

The protein belongs to the class-II aminoacyl-tRNA synthetase family. Type-1 seryl-tRNA synthetase subfamily. As to quaternary structure, homodimer. The tRNA molecule binds across the dimer.

The protein localises to the cytoplasm. It catalyses the reaction tRNA(Ser) + L-serine + ATP = L-seryl-tRNA(Ser) + AMP + diphosphate + H(+). The enzyme catalyses tRNA(Sec) + L-serine + ATP = L-seryl-tRNA(Sec) + AMP + diphosphate + H(+). It participates in aminoacyl-tRNA biosynthesis; selenocysteinyl-tRNA(Sec) biosynthesis; L-seryl-tRNA(Sec) from L-serine and tRNA(Sec): step 1/1. Its function is as follows. Catalyzes the attachment of serine to tRNA(Ser). Is also able to aminoacylate tRNA(Sec) with serine, to form the misacylated tRNA L-seryl-tRNA(Sec), which will be further converted into selenocysteinyl-tRNA(Sec). The polypeptide is Serine--tRNA ligase (Pyrobaculum calidifontis (strain DSM 21063 / JCM 11548 / VA1)).